A 410-amino-acid polypeptide reads, in one-letter code: Multifunctional CCA protein (410 aa).

ATP-binding residues include Gly-8 and Arg-11. 2 residues coordinate CTP: Gly-8 and Arg-11. 2 residues coordinate Mg(2+): Asp-21 and Asp-23. Arg-91, Arg-138, and Arg-141 together coordinate ATP. CTP is bound by residues Arg-91, Arg-138, and Arg-141. The 119-residue stretch at 229–347 (TGVHQEMVSD…AQLALVCEAD (119 aa)) folds into the HD domain.

Belongs to the tRNA nucleotidyltransferase/poly(A) polymerase family. Bacterial CCA-adding enzyme type 1 subfamily. In terms of assembly, monomer. Can also form homodimers and oligomers. It depends on Mg(2+) as a cofactor. Ni(2+) serves as cofactor.

The catalysed reaction is a tRNA precursor + 2 CTP + ATP = a tRNA with a 3' CCA end + 3 diphosphate. It carries out the reaction a tRNA with a 3' CCA end + 2 CTP + ATP = a tRNA with a 3' CCACCA end + 3 diphosphate. In terms of biological role, catalyzes the addition and repair of the essential 3'-terminal CCA sequence in tRNAs without using a nucleic acid template. Adds these three nucleotides in the order of C, C, and A to the tRNA nucleotide-73, using CTP and ATP as substrates and producing inorganic pyrophosphate. tRNA 3'-terminal CCA addition is required both for tRNA processing and repair. Also involved in tRNA surveillance by mediating tandem CCA addition to generate a CCACCA at the 3' terminus of unstable tRNAs. While stable tRNAs receive only 3'-terminal CCA, unstable tRNAs are marked with CCACCA and rapidly degraded. The sequence is that of Multifunctional CCA protein from Xanthomonas campestris pv. campestris (strain B100).